The sequence spans 858 residues: Taste receptor type 1 member 3 (858 aa).

The N-terminal stretch at 1–20 (MPGLAILGLSLAAFLELGMG) is a signal peptide. Over 21-575 (SSLCLSQQFK…FLAWGEPAVL (555 aa)) the chain is Extracellular. Asn85, Asn130, Asn203, Asn264, Asn379, Asn387, Asn418, Asn439, and Asn482 each carry an N-linked (GlcNAc...) asparagine glycan. Residues 576–596 (SLLLLLCLVLGLTLAALGLFV) traverse the membrane as a helical segment. The Cytoplasmic portion of the chain corresponds to 597–610 (HYWDSPLVQASGGS). A helical transmembrane segment spans residues 611–631 (LFCFGLICLGLFCLSVLLFPG). Residues 632 to 644 (RPRSASCLAQQPM) lie on the Extracellular side of the membrane. A helical transmembrane segment spans residues 645 to 665 (AHLPLTGCLSTLFLQAAEIFV). Topologically, residues 666–687 (ESELPLSWANWLCSYLRGPWAW) are cytoplasmic. A helical membrane pass occupies residues 688–708 (LVVLLATLVEAALCAWYLMAF). Over 709–735 (PPEVVTDWQVLPTEVLEHCRMRSWVSL) the chain is Extracellular. Residues 736-756 (GLVHITNAVLAFLCFLGTFLV) traverse the membrane as a helical segment. The Cytoplasmic segment spans residues 757–767 (QSQPGRYNRAR). Residues 768–788 (GLTFAMLAYFIIWVSFVPLLA) form a helical membrane-spanning segment. The Extracellular portion of the chain corresponds to 789 to 796 (NVQVAYQP). The helical transmembrane segment at 797 to 817 (AVQMGAILFCALGILATFHLP) threads the bilayer. Residues 818–858 (KCYVLLWLPELNTQEFFLGRSPKEASDGNSGSSEATRGHSE) lie on the Cytoplasmic side of the membrane. The interval 839-858 (PKEASDGNSGSSEATRGHSE) is disordered.

Belongs to the G-protein coupled receptor 3 family. TAS1R subfamily. As to quaternary structure, forms homodimers or heterodimers with TAS1R1 and TAS1R2.

Its subcellular location is the cell membrane. Its function is as follows. Putative taste receptor. TAS1R1/TAS1R3 responds to the umami taste stimulus (the taste of monosodium glutamate) and also to most of the 20 standard L-amino acids, but not to their D-enantiomers or other compounds. TAS1R2/TAS1R3 recognizes diverse natural and synthetic sweeteners. TAS1R3 is essential for the recognition and response to the disaccharide trehalose. Sequence differences within and between species can significantly influence the selectivity and specificity of taste responses. The chain is Taste receptor type 1 member 3 (Tas1r3) from Rattus norvegicus (Rat).